Reading from the N-terminus, the 164-residue chain is UPF0251 protein MM_1448 (164 aa).

Residues 91–100 (GDYRMPRGDR) show a composition bias toward basic and acidic residues. The tract at residues 91-123 (GDYRMPRGDRTGPAGQGPAGGGRGRGQGKGRGG) is disordered. The segment covering 104–115 (AGQGPAGGGRGR) has biased composition (gly residues).

It belongs to the UPF0251 family.

In Methanosarcina mazei (strain ATCC BAA-159 / DSM 3647 / Goe1 / Go1 / JCM 11833 / OCM 88) (Methanosarcina frisia), this protein is UPF0251 protein MM_1448.